Reading from the N-terminus, the 432-residue chain is Trigger factor (432 aa).

In terms of domain architecture, PPIase FKBP-type spans 161–246; the sequence is EDRVTIDFTG…LKKVEERELP (86 aa).

This sequence belongs to the FKBP-type PPIase family. Tig subfamily. In terms of assembly, homodimer and monomer. In vivo most of the ribosomes are in complex with monomeric TF. Uncomplexed TF, however, is in a monomer-dimer equilibrium with approximately two thirds of TF existing in a dimeric state.

The protein resides in the cytoplasm. It carries out the reaction [protein]-peptidylproline (omega=180) = [protein]-peptidylproline (omega=0). Involved in protein export. Acts as a chaperone by maintaining the newly synthesized protein in an open conformation. Functions as a peptidyl-prolyl cis-trans isomerase. The sequence is that of Trigger factor from Shigella dysenteriae serotype 1 (strain Sd197).